Consider the following 215-residue polypeptide: Small ribosomal subunit protein eS1 (215 aa).

The protein belongs to the eukaryotic ribosomal protein eS1 family.

This is Small ribosomal subunit protein eS1 from Halorubrum lacusprofundi (strain ATCC 49239 / DSM 5036 / JCM 8891 / ACAM 34).